Consider the following 203-residue polypeptide: CASP-like protein 1B1 (203 aa).

Topologically, residues 1-24 are cytoplasmic; sequence MALVNAEKPEVGSSPSSLGPRNKS. Residues 25-45 form a helical membrane-spanning segment; it reads WVLLMLRFVAFLATAAATIVM. Residues 46-76 are Extracellular-facing; sequence AANRETKTFVVATIGSTPIKATVTAKFQHTP. Residues 77–97 traverse the membrane as a helical segment; the sequence is AFVFFVIANGMGSIHNLVMIA. The Cytoplasmic segment spans residues 98–114; it reads GDTFVRKFDYKGLRWVT. The chain crosses the membrane as a helical span at residues 115–135; it reads VAILDMLTAALISGGVNAAVF. Residues 136-165 lie on the Extracellular side of the membrane; it reads MAELGKNGNSHAKWNKICDRFGSFCDHGGA. The chain crosses the membrane as a helical span at residues 166–186; that stretch reads AIIASFIGLLLMLVISIISII. Topologically, residues 187–203 are cytoplasmic; the sequence is KLLKPKSPLVDSHVLAP.

The protein belongs to the Casparian strip membrane proteins (CASP) family. In terms of assembly, homodimer and heterodimers.

It localises to the cell membrane. This chain is CASP-like protein 1B1, found in Ricinus communis (Castor bean).